The following is a 66-amino-acid chain: Large ribosomal subunit protein bL32 (66 aa).

The disordered stretch occupies residues 1 to 20 (MAVPKRRKSKSKVRTKRAHH).

It belongs to the bacterial ribosomal protein bL32 family.

In Leptospira borgpetersenii serovar Hardjo-bovis (strain JB197), this protein is Large ribosomal subunit protein bL32.